The following is a 1657-amino-acid chain: A disintegrin and metalloproteinase with thrombospondin motifs 7 (1657 aa).

The signal sequence occupies residues 1 to 20 (MHRGPSLLLILCALASRVLG). Positions 21 to 220 (PASGLVTEGR…QQQQKRRQQR (200 aa)) are excised as a propeptide. Asn84 carries an N-linked (GlcNAc...) asparagine glycan. A disordered region spans residues 165–221 (PGHAQPHVVYKHQGSRKQAQQGDSRPSGTCGMQVPPDLEQQREHWEQQQQKRRQQRS). Over residues 180 to 191 (RKQAQQGDSRPS) the composition is skewed to polar residues. Positions 192 to 199 (GTCGMQVP) match the Cysteine switch motif. Cys194 is a binding site for Zn(2+). In terms of domain architecture, Peptidase M12B spans 226 to 437 (KWVETLVVAD…GWGLCLDDRP (212 aa)). Disulfide bonds link Cys302–Cys356, Cys331–Cys338, Cys350–Cys432, Cys389–Cys416, Cys459–Cys482, Cys470–Cys488, Cys477–Cys507, Cys501–Cys512, Cys535–Cys572, Cys539–Cys577, and Cys550–Cys562. His372 serves as a coordination point for Zn(2+). Residue Glu373 is part of the active site. Zn(2+) is bound by residues His376 and His382. A Disintegrin domain is found at 447-522 (VLPGVLYDVN…VPEGFQPEAV (76 aa)). Positions 523-578 (DGGWSGWSAWSDCSRSCGVGVRSSERQCTQPVPKNRGKYCVGERKRSQLCNLPACP) constitute a TSP type-1 1 domain. Asn622 carries N-linked (GlcNAc...) asparagine glycosylation. Residues 683-794 (QTVSRTFKET…PGVHYQYTIQ (112 aa)) are spacer. 3 TSP type-1 domains span residues 804 to 863 (PEFS…EPCP), 864 to 923 (PRWW…NRHV), and 925 to 978 (CPST…QPCQ). 5 disordered regions span residues 1009 to 1034 (LAPRPSPASSPKPVSISNAIDEEELD), 1073 to 1127 (GGWT…GLEQ), 1140 to 1237 (EDTP…DVVE), 1283 to 1304 (GRDSPLEPGTPTFSSPELSSQH), and 1317 to 1384 (TVPT…ARNA). A compositionally biased stretch (pro residues) spans 1211–1224 (PQSPIPTQPSPPSI). 2 stretches are compositionally biased toward polar residues: residues 1293 to 1304 (PTFSSPELSSQH) and 1327 to 1342 (PSGQPQTPNLEGTQSP). 4 consecutive TSP type-1 domains span residues 1366–1414 (QPSL…SGND), 1417–1477 (CTLA…CQPG), 1479–1522 (TKPP…PEPG), and 1524–1584 (CEES…LCSH). The PLAC domain occupies 1587–1627 (WPESSRPCATEDCELVEPPRCERDRLSFNFCETLRLLGRCQ).

As to quaternary structure, interacts with COMP. The cofactor is Zn(2+). In terms of processing, N-glycosylated. Can be O-fucosylated by POFUT2 on a serine or a threonine residue found within the consensus sequence C1-X(2)-(S/T)-C2-G of the TSP type-1 repeat domains where C1 and C2 are the first and second cysteine residue of the repeat, respectively. Fucosylated repeats can then be further glycosylated by the addition of a beta-1,3-glucose residue by the glucosyltransferase, B3GALTL. Fucosylation mediates the efficient secretion of ADAMTS family members. Can also be C-glycosylated with one or two mannose molecules on tryptophan residues within the consensus sequence W-X-X-W of the TPRs. N- and C-glycosylations can also facilitate secretion. Post-translationally, O-glycosylated proteoglycan; contains chondroitin sulfate. May be cleaved by a furin endopeptidase. The precursor is sequentially processed.

The protein resides in the secreted. It is found in the extracellular space. The protein localises to the extracellular matrix. In terms of biological role, metalloprotease. Was previously shown to degrade COMP. However, a later study found no activity against COMP. This chain is A disintegrin and metalloproteinase with thrombospondin motifs 7 (Adamts7), found in Mus musculus (Mouse).